The primary structure comprises 729 residues: Fibroblast growth factor receptor 2 (729 aa).

An N-terminal signal peptide occupies residues 1–21; that stretch reads MFSWSYLMGLVMVATATLSLA. Topologically, residues 22–285 are extracellular; the sequence is RPSYNIAEDT…ELDSSSEYTE (264 aa). A disordered region spans residues 29 to 62; that stretch reads EDTTLEPEDANSSGDDEDDNDGSEDFTNDNNHMR. The span at 31-55 shows a compositional bias: acidic residues; sequence TTLEPEDANSSGDDEDDNDGSEDFT. An N-linked (GlcNAc...) asparagine glycan is attached at Asn-39. 2 Ig-like C2-type domains span residues 64–157 and 166–268; these read PYWT…YHLD and PILQ…AWLT. Residues 71–88 are heparin-binding; sequence KLEKKLHAVPAANTVKFR. Cys-89 and Cys-141 are joined by a disulfide. 7 N-linked (GlcNAc...) asparagine glycosylation sites follow: Asn-138, Asn-151, Asn-175, Asn-207, Asn-228, Asn-241, and Asn-256. The cysteines at positions 188 and 252 are disulfide-linked. A helical transmembrane segment spans residues 286-306; the sequence is IAIYCVGGFLITCMIGTIMVC. At 307–729 the chain is on the cytoplasmic side; that stretch reads HMKGRGKKSD…SQHTNGTIKT (423 aa). Tyr-374 is subject to Phosphotyrosine; by autocatalysis. The 290-residue stretch at 389–678 folds into the Protein kinase domain; that stretch reads LTLGKPLGEG…LTQTTNEEYL (290 aa). Residues 395-403, Lys-425, 473-475, and Asn-479 contribute to the ATP site; these read LGEGCFGQV and EYA. Residue Tyr-494 is modified to Phosphotyrosine; by autocatalysis. Asp-534 functions as the Proton acceptor in the catalytic mechanism. Phosphotyrosine; by autocatalysis is present on residues Tyr-564, Tyr-565, and Tyr-677. Residues 683–729 form a disordered region; sequence PLEQYSPSYPDTRSSCSSGDDSVFSPDAMPYDPCLPKSQHTNGTIKT. A compositionally biased stretch (low complexity) spans 693–707; it reads DTRSSCSSGDDSVFS. A compositionally biased stretch (polar residues) spans 720 to 729; that stretch reads SQHTNGTIKT.

It belongs to the protein kinase superfamily. Tyr protein kinase family. Fibroblast growth factor receptor subfamily. In terms of assembly, monomer. Homodimer after ligand binding. Autophosphorylated. Binding of FGF family members together with heparan sulfate proteoglycan or heparin promotes receptor dimerization and autophosphorylation on tyrosine residues. Autophosphorylation occurs in trans between the two FGFR molecules present in the dimer. In terms of processing, N-glycosylated in the endoplasmic reticulum. The N-glycan chains undergo further maturation to an Endo H-resistant form in the Golgi apparatus. Post-translationally, ubiquitinated. FGFR2 is rapidly ubiquitinated after autophosphorylation, leading to internalization and degradation. Subject to degradation both in lysosomes and by the proteasome.

It is found in the cell membrane. Its subcellular location is the golgi apparatus. It localises to the cytoplasmic vesicle. The enzyme catalyses L-tyrosyl-[protein] + ATP = O-phospho-L-tyrosyl-[protein] + ADP + H(+). Present in an inactive conformation in the absence of bound ligand. Ligand binding leads to dimerization and activation by autophosphorylation on tyrosine residues. Its function is as follows. Tyrosine-protein kinase that acts as a cell-surface receptor for fibroblast growth factors and plays an essential role in the regulation of cell proliferation, differentiation, migration and apoptosis, and in the regulation of embryonic development. Required for normal embryonic patterning, limb bud development, lung morphogenesis, osteogenesis and skin development. Plays an essential role in the regulation of osteoblast differentiation, proliferation and apoptosis, and is required for normal skeleton development. Promotes cell proliferation in keratinocytes and immature osteoblasts, but promotes apoptosis in differentiated osteoblasts. Phosphorylates PLCG1, FRS2 and PAK4. Ligand binding leads to the activation of several signaling cascades. Activation of PLCG1 leads to the production of the cellular signaling molecules diacylglycerol and inositol 1,4,5-trisphosphate. Phosphorylation of FRS2 triggers recruitment of GRB2, GAB1, PIK3R1 and SOS1, and mediates activation of RAS, MAPK1/ERK2, MAPK3/ERK1 and the MAP kinase signaling pathway, as well as of the AKT1 signaling pathway. FGFR2 signaling is down-regulated by ubiquitination, internalization and degradation. Mutations that lead to constitutive kinase activation or impair normal FGFR2 maturation, internalization and degradation lead to aberrant signaling. Over-expressed FGFR2 promotes activation of STAT1. The protein is Fibroblast growth factor receptor 2 (FGFR2) of Notophthalmus viridescens (Eastern newt).